Reading from the N-terminus, the 434-residue chain is FAD-dependent monooxygenase cfoG (434 aa).

The first 22 residues, 1–22 (MKSSPGLHIIIVGAGITGLATA), serve as a signal peptide directing secretion. Glutamate 36 contributes to the FAD binding site. Residues arginine 193 and tyrosine 233 contribute to the active site. Positions 314 and 327 each coordinate FAD.

It belongs to the paxM FAD-dependent monooxygenase family. Monomer. FAD serves as cofactor.

It participates in secondary metabolite biosynthesis; flavonoid biosynthesis. Functionally, monooxygenase; part of the gene cluster that mediates the biosynthesis of chlorflavonin, a fungal flavonoid with acetolactate synthase inhibitory activity. Within the pathway, cfoG is responsible for the hydroxylation of the flavonoid skeleton at position C8. The pathway begins with the PKS-NRPS hybrid synthetase cfoA that uses benzoic acid or p-hydroxybenzoic acid as a starter unit with four rounds of chain elongation using malonyl-CoA to form the chalcone skeleton. Then, a new type of chalcone isomerase, cfoK, catalyzes the conversion of the chalcone into a flavanone by a histidine-mediated oxa-Michael addition mechanism. The desaturation of flavanone to flavone is catalyzed by a new type of flavone synthase, the flavin mononucleotide (FMN)-dependent oxidoreductase cfoJ. Monooxygenases cfoF, cfoG, and P450 cfoH are responsible for the hydroxylation of the flavonoid skeleton at sites C3, C8, and C2', respectively. Like cfoF, the dehydratase cfoI plays also a role in the hydroxylation of position C3. Methyltransferases cfoB, cfoC, and cfoD then catalyze the methylation of C7-OH, C8-OH, and C3-OH, respectively. Finally, the monooxygenase cfoE is responsible for the chlorination of flavonoid at position C3'. This is FAD-dependent monooxygenase cfoG from Aspergillus candidus.